The following is a 558-amino-acid chain: Cytochrome P450 monooxygenase grgG (558 aa).

Residues 11-31 (PASFIYFPLLILVGHALIFIL) form a helical membrane-spanning segment. Cys-470 is a heme binding site.

It belongs to the cytochrome P450 family. Heme is required as a cofactor.

Its subcellular location is the membrane. It functions in the pathway secondary metabolite biosynthesis. Its function is as follows. Cytochrome P450 monooxygenase; part of the gene cluster that mediates the biosynthesis of gregatin A, a fungal polyketide featuring an alkylated furanone core. The PKS grgA synthesizes C11 and C4 polyketide chains in the presence and absence of the trans-enoyl reductase grgB, respectively. The polyketide transferase grgF is then responsible for the fusion of the two carbon chains to produce the furanone skeleton of gregatin A. Next, the cytochrome P450 monooxygenase grgG performs the oxidative cyclization to furnish the gregatin scaffold and leads to the formation of desmethylgregatin A. In this transformation, grgG initially abstracts a hydrogen atom from C-8 to generate a substrate radical, from which one electron is transferred to the iron-heme center to yield a carbocationic species. Heterocyclization along with double-bond isomerizations provides desmethylgregatin A with the furanone ring. Alternatively, grgG might provide hydroxylation at the C-8 radical, which is followed by dehydration to give the cyclized desmethylgregatin A. Finally, the O-methyltransferase grgD methylates the carboxyl group of desmethylgregatin A to provide gregatin A. This chain is Cytochrome P450 monooxygenase grgG (grgG), found in Penicillium sp.